The primary structure comprises 169 residues: Lutropin/choriogonadotropin subunit beta (169 aa).

A signal peptide spans 1–20; that stretch reads METLQGLLLWMLLSVGGVWA. Disulfide bonds link Cys29–Cys77, Cys43–Cys92, Cys46–Cys130, Cys54–Cys108, Cys58–Cys110, and Cys113–Cys120. Asn33 carries N-linked (GlcNAc...) asparagine glycosylation. The segment at 131–169 is disordered; it reads APQASSSSKDPPSQPLTSTSTPTPGASRRSSHPLPIKTS. 2 O-linked (GalNAc...) serine glycosylation sites follow: Ser138 and Ser143. A compositionally biased stretch (low complexity) spans 145 to 158; it reads PLTSTSTPTPGASR. The O-linked (GalNAc...) threonine glycan is linked to Thr147. A glycan (O-linked (GalNAc...) serine) is linked at Ser148. Thr149 carries an O-linked (GalNAc...) threonine glycan. Ser150 carries O-linked (GalNAc...) serine glycosylation. Residues Thr151 and Thr153 are each glycosylated (O-linked (GalNAc...) threonine). Residues Ser157, Ser160, Ser161, and Ser169 are each glycosylated (O-linked (GalNAc...) serine).

It belongs to the glycoprotein hormones subunit beta family. Heterodimer of a common alpha chain and a unique beta chain which confers biological specificity to thyrotropin, lutropin, follitropin and gonadotropin. Microheterogeneity at Asn-33. O-glycosylation appears to be responsible for the beta subunit contribution to the difference in LH-receptor binding activity between LSH-B and CG-B.

The protein localises to the secreted. Functionally, promotes spermatogenesis and ovulation by stimulating the testes and ovaries to synthesize steroids. This Equus caballus (Horse) protein is Lutropin/choriogonadotropin subunit beta (LHB).